The sequence spans 268 residues: Orotidine 5'-phosphate decarboxylase (268 aa).

Residues D38, 60–62 (KTH), 92–101 (DRKFADIGNT), Y218, and R236 each bind substrate. The Proton donor role is filled by K94.

It belongs to the OMP decarboxylase family.

The enzyme catalyses orotidine 5'-phosphate + H(+) = UMP + CO2. Its pathway is pyrimidine metabolism; UMP biosynthesis via de novo pathway; UMP from orotate: step 2/2. The sequence is that of Orotidine 5'-phosphate decarboxylase (URA3) from Candida tropicalis (Yeast).